A 457-amino-acid polypeptide reads, in one-letter code: ERV-H1 provirus ancestral Env polyprotein (457 aa).

Residues 1–35 (MIFAGKAPSNTSTLMKFYSLILYSLLFSFPFLCHP) form the signal peptide. Residues Asn10 and Asn47 are each glycosylated (N-linked (GlcNAc...) asparagine). The CXXC motif lies at 64–67 (CWLC). 6 N-linked (GlcNAc...) asparagine glycosylation sites follow: Asn197, Asn222, Asn265, Asn283, Asn352, and Asn370. The fusion peptide stretch occupies residues 388–408 (VIPLIPLMFGLGLSASTIALS).

The protein belongs to the gamma type-C retroviral envelope protein family. HERV class-I H env subfamily. As to quaternary structure, the surface (SU) and transmembrane (TM) proteins form a heterodimer. SU and TM are attached by noncovalent interactions or by a labile interchain disulfide bond. In terms of processing, specific enzymatic cleavages in vivo yield the mature SU and TM proteins. Post-translationally, the CXXC motif is highly conserved across a broad range of retroviral envelope proteins. It is thought to participate in the formation of a labile disulfide bond possibly with the CX6CC motif present in the transmembrane protein.

The protein localises to the virion. Its function is as follows. Retroviral envelope proteins mediate receptor recognition and membrane fusion during early infection. Endogenous envelope proteins may have kept, lost or modified their original function during evolution. In terms of biological role, SU mediates receptor recognition. TM anchors the envelope heterodimer to the viral membrane through one transmembrane domain. The other hydrophobic domain, called fusion peptide, mediates fusion of the viral membrane with the target cell membrane. The protein is ERV-H1 provirus ancestral Env polyprotein of Pan troglodytes (Chimpanzee).